An 88-amino-acid polypeptide reads, in one-letter code: Large ribosomal subunit protein bL27 (88 aa).

Positions 1 to 22 (MAQKKAGGSSRNGRDSAGRRLG) are disordered.

Belongs to the bacterial ribosomal protein bL27 family.

The sequence is that of Large ribosomal subunit protein bL27 from Gluconobacter oxydans (strain 621H) (Gluconobacter suboxydans).